The chain runs to 438 residues: tRNA wybutosine-synthesizing protein 2 homolog (438 aa).

S-adenosyl-L-methionine-binding positions include serine 209, lysine 216, glutamate 256, and 284-285; that span reads DN.

This sequence belongs to the class I-like SAM-binding methyltransferase superfamily. TRM5/TYW2 family.

The catalysed reaction is 4-demethylwyosine(37) in tRNA(Phe) + S-adenosyl-L-methionine = 4-demethyl-7-[(3S)-3-amino-3-carboxypropyl]wyosine(37) in tRNA(Phe) + S-methyl-5'-thioadenosine + H(+). Its pathway is tRNA modification; wybutosine-tRNA(Phe) biosynthesis. S-adenosyl-L-methionine-dependent transferase that acts as a component of the wybutosine biosynthesis pathway. Wybutosine is a hyper modified guanosine with a tricyclic base found at the 3'-position adjacent to the anticodon of eukaryotic phenylalanine tRNA. Catalyzes the transfer of the alpha-amino-alpha-carboxypropyl (acp) group from S-adenosyl-L-methionine to the C-7 position of 4-demethylwyosine (imG-14) to produce wybutosine-86. This Bos taurus (Bovine) protein is tRNA wybutosine-synthesizing protein 2 homolog (TRMT12).